We begin with the raw amino-acid sequence, 234 residues long: Large ribosomal subunit protein uL1 (234 aa).

The protein belongs to the universal ribosomal protein uL1 family. In terms of assembly, part of the 50S ribosomal subunit.

In terms of biological role, binds directly to 23S rRNA. The L1 stalk is quite mobile in the ribosome, and is involved in E site tRNA release. Functionally, protein L1 is also a translational repressor protein, it controls the translation of the L11 operon by binding to its mRNA. The sequence is that of Large ribosomal subunit protein uL1 from Edwardsiella ictaluri (strain 93-146).